A 257-amino-acid polypeptide reads, in one-letter code: 5-oxoprolinase subunit A (257 aa).

It belongs to the LamB/PxpA family. As to quaternary structure, forms a complex composed of PxpA, PxpB and PxpC.

It carries out the reaction 5-oxo-L-proline + ATP + 2 H2O = L-glutamate + ADP + phosphate + H(+). Functionally, catalyzes the cleavage of 5-oxoproline to form L-glutamate coupled to the hydrolysis of ATP to ADP and inorganic phosphate. The chain is 5-oxoprolinase subunit A from Bacillus subtilis (strain 168).